The sequence spans 97 residues: Co-chaperonin GroES (97 aa).

Belongs to the GroES chaperonin family. As to quaternary structure, heptamer of 7 subunits arranged in a ring. Interacts with the chaperonin GroEL.

The protein resides in the cytoplasm. Its function is as follows. Together with the chaperonin GroEL, plays an essential role in assisting protein folding. The GroEL-GroES system forms a nano-cage that allows encapsulation of the non-native substrate proteins and provides a physical environment optimized to promote and accelerate protein folding. GroES binds to the apical surface of the GroEL ring, thereby capping the opening of the GroEL channel. This is Co-chaperonin GroES from Pseudomonas fluorescens (strain Pf0-1).